The chain runs to 388 residues: Probable pectin lyase F-1 (388 aa).

The N-terminal stretch at 1–19 (MKTATFSTLLALSASAVNA) is a signal peptide. The cysteines at positions 80 and 103 are disulfide-linked. N-linked (GlcNAc...) asparagine glycosylation occurs at asparagine 126. Arginine 253 is a catalytic residue. An intrachain disulfide couples cysteine 328 to cysteine 336.

Belongs to the polysaccharide lyase 1 family.

It localises to the secreted. The enzyme catalyses Eliminative cleavage of (1-&gt;4)-alpha-D-galacturonan methyl ester to give oligosaccharides with 4-deoxy-6-O-methyl-alpha-D-galact-4-enuronosyl groups at their non-reducing ends.. Its function is as follows. Pectinolytic enzymes consist of four classes of enzymes: pectin lyase, polygalacturonase, pectin methylesterase and rhamnogalacturonase. Among pectinolytic enzymes, pectin lyase is the most important in depolymerization of pectin, since it cleaves internal glycosidic bonds of highly methylated pectins. The protein is Probable pectin lyase F-1 (pelF-1) of Aspergillus terreus (strain NIH 2624 / FGSC A1156).